The chain runs to 348 residues: Holliday junction branch migration complex subunit RuvB (348 aa).

The large ATPase domain (RuvB-L) stretch occupies residues 1-183 (MAPQPRRLIA…FGIPIRLEYY (183 aa)). ATP contacts are provided by residues Leu22, Arg23, Gly64, Lys67, Thr68, Thr69, 130-132 (EDF), Arg173, Tyr183, and Arg220. Thr68 contacts Mg(2+). The small ATPAse domain (RuvB-S) stretch occupies residues 184 to 254 (TVEELECIVR…VADRALRLLD (71 aa)). Residues 257-348 (HIGLDQMDRR…FQLFSEGGEE (92 aa)) are head domain (RuvB-H). DNA is bound by residues Arg293, Arg312, and Arg317.

The protein belongs to the RuvB family. In terms of assembly, homohexamer. Forms an RuvA(8)-RuvB(12)-Holliday junction (HJ) complex. HJ DNA is sandwiched between 2 RuvA tetramers; dsDNA enters through RuvA and exits via RuvB. An RuvB hexamer assembles on each DNA strand where it exits the tetramer. Each RuvB hexamer is contacted by two RuvA subunits (via domain III) on 2 adjacent RuvB subunits; this complex drives branch migration. In the full resolvosome a probable DNA-RuvA(4)-RuvB(12)-RuvC(2) complex forms which resolves the HJ.

The protein resides in the cytoplasm. The enzyme catalyses ATP + H2O = ADP + phosphate + H(+). Its function is as follows. The RuvA-RuvB-RuvC complex processes Holliday junction (HJ) DNA during genetic recombination and DNA repair, while the RuvA-RuvB complex plays an important role in the rescue of blocked DNA replication forks via replication fork reversal (RFR). RuvA specifically binds to HJ cruciform DNA, conferring on it an open structure. The RuvB hexamer acts as an ATP-dependent pump, pulling dsDNA into and through the RuvAB complex. RuvB forms 2 homohexamers on either side of HJ DNA bound by 1 or 2 RuvA tetramers; 4 subunits per hexamer contact DNA at a time. Coordinated motions by a converter formed by DNA-disengaged RuvB subunits stimulates ATP hydrolysis and nucleotide exchange. Immobilization of the converter enables RuvB to convert the ATP-contained energy into a lever motion, pulling 2 nucleotides of DNA out of the RuvA tetramer per ATP hydrolyzed, thus driving DNA branch migration. The RuvB motors rotate together with the DNA substrate, which together with the progressing nucleotide cycle form the mechanistic basis for DNA recombination by continuous HJ branch migration. Branch migration allows RuvC to scan DNA until it finds its consensus sequence, where it cleaves and resolves cruciform DNA. The polypeptide is Holliday junction branch migration complex subunit RuvB (Methylocella silvestris (strain DSM 15510 / CIP 108128 / LMG 27833 / NCIMB 13906 / BL2)).